A 160-amino-acid polypeptide reads, in one-letter code: Protein max (160 aa).

Acidic residues predominate over residues 1-13 (MSDNDDIEVESDE). The disordered stretch occupies residues 1–40 (MSDNDDIEVESDEEQPRFQSAADKRAHHNALERKRRDHIK). Ser2 is modified (N-acetylserine). Phosphoserine occurs at positions 2 and 11. The region spanning 23-74 (DKRAHHNALERKRRDHIKDSFHSLRDSVPSLQGEKASRAQILDKATEYIQYM) is the bHLH domain. Residues 29 to 40 (NALERKRRDHIK) are compositionally biased toward basic and acidic residues. Lys66 carries the N6-acetyllysine modification. The interval 81–102 (HQQDIDDLKRQNALLEQQVRAL) is leucine-zipper. Residues 105 to 160 (ARSSAQLQTNYPSSDNSLYTNAKGGTISAFDGGSDSSSESEPEEPQNRKKLRMEAS) form a disordered region. The residue at position 107 (Ser107) is a Phosphoserine. A compositionally biased stretch (polar residues) spans 107–124 (SSAQLQTNYPSSDNSLYT). Residues Lys153 and Lys154 each carry the N6-acetyllysine modification.

Belongs to the MAX family. Efficient DNA binding requires dimerization with another bHLH protein. Binds DNA as a heterodimer with MYC or MAD. Part of the E2F6.com-1 complex in G0 phase composed of E2F6, MGA, MAX, TFDP1, CBX3, BAT8, EUHMTASE1, RING1, RNF2, MBLR, L3MBTL2 and YAF2. Component of some MLL1/MLL complex, at least composed of the core components KMT2A/MLL1, ASH2L, HCFC1/HCF1, WDR5 and RBBP5, as well as the facultative components BACC1, CHD8, E2F6, HSP70, INO80C, KANSL1, LAS1L, MAX, MCRS1, MGA, MYST1/MOF, PELP1, PHF20, PRP31, RING2, RUVB1/TIP49A, RUVB2/TIP49B, SENP3, TAF1, TAF4, TAF6, TAF7, TAF9 and TEX10. Interacts with SPAG9. The heterodimer MYC:MAX interacts with ABI1; the interaction may enhance MYC:MAX transcriptional activity. In terms of processing, phosphorylated.

The protein resides in the nucleus. The protein localises to the cell projection. It localises to the dendrite. In terms of biological role, transcription regulator. Forms a sequence-specific DNA-binding protein complex with MYC or MAD which recognizes the core sequence 5'-CAC[GA]TG-3'. The MYC:MAX complex is a transcriptional activator, whereas the MAD:MAX complex is a repressor. May repress transcription via the recruitment of a chromatin remodeling complex containing H3 'Lys-9' histone methyltransferase activity. Represses MYC transcriptional activity from E-box elements. This chain is Protein max, found in Rattus norvegicus (Rat).